A 510-amino-acid chain; its full sequence is Amidophosphoribosyltransferase (510 aa).

Cys-2 serves as the catalytic Nucleophile. One can recognise a Glutamine amidotransferase type-2 domain in the interval 2–239 (CGILGIVLAN…PGEAVIIPKN (238 aa)). Residues Asp-373 and Asp-374 each contribute to the Mg(2+) site.

It in the C-terminal section; belongs to the purine/pyrimidine phosphoribosyltransferase family. Mg(2+) serves as cofactor.

The enzyme catalyses 5-phospho-beta-D-ribosylamine + L-glutamate + diphosphate = 5-phospho-alpha-D-ribose 1-diphosphate + L-glutamine + H2O. It functions in the pathway purine metabolism; IMP biosynthesis via de novo pathway; N(1)-(5-phospho-D-ribosyl)glycinamide from 5-phospho-alpha-D-ribose 1-diphosphate: step 1/2. The polypeptide is Amidophosphoribosyltransferase (ADE4) (Saccharomyces cerevisiae (strain ATCC 204508 / S288c) (Baker's yeast)).